A 300-amino-acid chain; its full sequence is Geranylgeranyl pyrophosphate synthase (300 aa).

Position 1 is an N-acetylmethionine (Met-1). Isopentenyl diphosphate contacts are provided by Lys-25, Arg-28, and His-57. Mg(2+)-binding residues include Asp-64 and Asp-68. Arg-73 provides a ligand contact to dimethylallyl diphosphate. An isopentenyl diphosphate-binding site is contributed by Arg-74. Positions 151, 152, 185, 202, and 212 each coordinate dimethylallyl diphosphate.

This sequence belongs to the FPP/GGPP synthase family. In terms of assembly, homohexamer; trimer of homodimers. Requires Mg(2+) as cofactor.

The protein localises to the cytoplasm. The protein resides in the perinuclear region. It is found in the myofibril. It localises to the sarcomere. Its subcellular location is the z line. The enzyme catalyses isopentenyl diphosphate + dimethylallyl diphosphate = (2E)-geranyl diphosphate + diphosphate. It catalyses the reaction isopentenyl diphosphate + (2E)-geranyl diphosphate = (2E,6E)-farnesyl diphosphate + diphosphate. The catalysed reaction is isopentenyl diphosphate + (2E,6E)-farnesyl diphosphate = (2E,6E,10E)-geranylgeranyl diphosphate + diphosphate. The protein operates within isoprenoid biosynthesis; farnesyl diphosphate biosynthesis; farnesyl diphosphate from geranyl diphosphate and isopentenyl diphosphate: step 1/1. It participates in isoprenoid biosynthesis; geranyl diphosphate biosynthesis; geranyl diphosphate from dimethylallyl diphosphate and isopentenyl diphosphate: step 1/1. It functions in the pathway isoprenoid biosynthesis; geranylgeranyl diphosphate biosynthesis; geranylgeranyl diphosphate from farnesyl diphosphate and isopentenyl diphosphate: step 1/1. Functionally, catalyzes the trans-addition of the three molecules of isopentenyl diphosphate (IPP) onto dimethylallyl pyrophosphate (DMAPP) to form geranylgeranyl pyrophosphate, an important precursor of carotenoids and geranylated proteins. This chain is Geranylgeranyl pyrophosphate synthase, found in Mus musculus (Mouse).